A 444-amino-acid chain; its full sequence is Methylenetetrahydrofolate--tRNA-(uracil-5-)-methyltransferase TrmFO (444 aa).

10–15 is an FAD binding site; the sequence is GAGLAG.

Belongs to the MnmG family. TrmFO subfamily. FAD is required as a cofactor.

It is found in the cytoplasm. The catalysed reaction is uridine(54) in tRNA + (6R)-5,10-methylene-5,6,7,8-tetrahydrofolate + NADH + H(+) = 5-methyluridine(54) in tRNA + (6S)-5,6,7,8-tetrahydrofolate + NAD(+). It catalyses the reaction uridine(54) in tRNA + (6R)-5,10-methylene-5,6,7,8-tetrahydrofolate + NADPH + H(+) = 5-methyluridine(54) in tRNA + (6S)-5,6,7,8-tetrahydrofolate + NADP(+). Catalyzes the folate-dependent formation of 5-methyl-uridine at position 54 (M-5-U54) in all tRNAs. The chain is Methylenetetrahydrofolate--tRNA-(uracil-5-)-methyltransferase TrmFO from Streptococcus agalactiae serotype Ia (strain ATCC 27591 / A909 / CDC SS700).